A 161-amino-acid chain; its full sequence is Allophycocyanin beta chain (161 aa).

An N4-methylasparagine modification is found at N71. C81 contributes to the (2R,3E)-phycocyanobilin binding site.

This sequence belongs to the phycobiliprotein family. Heterodimer of an alpha and a beta chain. In terms of processing, contains one covalently linked phycocyanobilin chromophore.

It is found in the cellular thylakoid membrane. Light-harvesting photosynthetic bile pigment-protein from the phycobiliprotein complex. Allophycocyanin has a maximum absorption at approximately 650 nanometers. The polypeptide is Allophycocyanin beta chain (apcB) (Synechocystis sp. (strain PCC 6714) (Aphanocapsa sp. (strain PCC 6714))).